The following is a 49-amino-acid chain: Large ribosomal subunit protein bL33B (49 aa).

It belongs to the bacterial ribosomal protein bL33 family.

The polypeptide is Large ribosomal subunit protein bL33B (rpmGB) (Bacillus licheniformis).